Here is a 411-residue protein sequence, read N- to C-terminus: Actin-like protein 9 (411 aa).

Residues 1–15 (MDVNGPKRWEPHRSL) show a composition bias toward basic and acidic residues. The tract at residues 1-23 (MDVNGPKRWEPHRSLDLNPRSTP) is disordered.

The protein belongs to the actin family. Interacts with ACTL7A.

It localises to the cytoplasmic vesicle. It is found in the secretory vesicle. The protein localises to the acrosome. Its subcellular location is the cytoplasm. The protein resides in the cytoskeleton. It localises to the perinuclear theca. Testis-specic protein that plays an important role in fusion of proacrosomal vesicles and perinuclear theca formation. The polypeptide is Actin-like protein 9 (Actl9) (Rattus norvegicus (Rat)).